Here is a 349-residue protein sequence, read N- to C-terminus: DNA fragmentation factor subunit beta (349 aa).

Residues 7–83 enclose the CIDE-N domain; sequence QPKCVKLRAL…LLTAGETWHG (77 aa). The disordered stretch occupies residues 319 to 349; sequence RSRIYRPQTGSRRKQPPRKQPPRKRPPRKRQ. The span at 329–349 shows a compositional bias: basic residues; it reads SRRKQPPRKQPPRKRPPRKRQ.

In terms of assembly, heterodimer of DFFA and DFFB. Interacts with H1-1.

It localises to the cytoplasm. It is found in the nucleus. Inhibited by DFFA (DFF45). Nuclease that induces DNA fragmentation and chromatin condensation during apoptosis. Degrades naked DNA and induces apoptotic morphology. This Rattus norvegicus (Rat) protein is DNA fragmentation factor subunit beta (Dffb).